Consider the following 187-residue polypeptide: Putative type I specificity subunit S.MpnORF289P N-terminus (187 aa).

The protein belongs to the type-I restriction system S methylase family. The methyltransferase is composed of M and S polypeptides.

Its function is as follows. The N-terminal section of a specificity (S) subunit of a type I methyltransferase (MTase); this subunit dictates DNA sequence specificity. The single R subunit has multiple frameshifts and is probably not expressed. In Mycoplasma pneumoniae (strain ATCC 29342 / M129 / Subtype 1) (Mycoplasmoides pneumoniae), this protein is Putative type I specificity subunit S.MpnORF289P N-terminus.